The primary structure comprises 220 residues: Deoxyribose-phosphate aldolase (220 aa).

Aspartate 89 functions as the Proton donor/acceptor in the catalytic mechanism. Lysine 151 serves as the catalytic Schiff-base intermediate with acetaldehyde. Lysine 180 serves as the catalytic Proton donor/acceptor.

The protein belongs to the DeoC/FbaB aldolase family. DeoC type 1 subfamily.

The protein resides in the cytoplasm. The enzyme catalyses 2-deoxy-D-ribose 5-phosphate = D-glyceraldehyde 3-phosphate + acetaldehyde. It functions in the pathway carbohydrate degradation; 2-deoxy-D-ribose 1-phosphate degradation; D-glyceraldehyde 3-phosphate and acetaldehyde from 2-deoxy-alpha-D-ribose 1-phosphate: step 2/2. Its function is as follows. Catalyzes a reversible aldol reaction between acetaldehyde and D-glyceraldehyde 3-phosphate to generate 2-deoxy-D-ribose 5-phosphate. The sequence is that of Deoxyribose-phosphate aldolase from Lactococcus lactis subsp. cremoris (strain SK11).